The primary structure comprises 154 residues: Putative pre-16S rRNA nuclease (154 aa).

The protein belongs to the YqgF nuclease family.

It is found in the cytoplasm. Functionally, could be a nuclease involved in processing of the 5'-end of pre-16S rRNA. The protein is Putative pre-16S rRNA nuclease of Rickettsia canadensis (strain McKiel).